Reading from the N-terminus, the 165-residue chain is Endoribonuclease YbeY (165 aa).

Zn(2+) contacts are provided by H119, H123, and H129.

Belongs to the endoribonuclease YbeY family. Zn(2+) serves as cofactor.

It localises to the cytoplasm. Single strand-specific metallo-endoribonuclease involved in late-stage 70S ribosome quality control and in maturation of the 3' terminus of the 16S rRNA. The chain is Endoribonuclease YbeY from Streptomyces coelicolor (strain ATCC BAA-471 / A3(2) / M145).